The chain runs to 287 residues: Aquaporin PIP2-1 (287 aa).

M1 carries the N-acetylmethionine modification. Over 2–39 (AKDVEAVPGEGFQTRDYQDPPPAPFIDGAELKKWSFYR) the chain is Cytoplasmic. K3 carries the post-translational modification N6,N6-dimethyllysine; partial. Residues 40-60 (AVIAEFVATLLFLYITVLTVI) form a helical membrane-spanning segment. The Extracellular portion of the chain corresponds to 61-83 (GYKIQSDTDAGGVDCGGVGILGI). The chain crosses the membrane as a helical span at residues 84–104 (AWAFGGMIFILVYCTAGISGG). The Cytoplasmic portion of the chain corresponds to 105 to 125 (HINPAVTFGLFLARKVSLPRA). The NPA 1 signature appears at 107 to 109 (NPA). The helical transmembrane segment at 126–146 (LLYIIAQCLGAICGVGFVKAF) threads the bilayer. At 147–167 (QSSYYTRYGGGANSLADGYST) the chain is on the extracellular side. Residues 168-188 (GTGLAAEIIGTFVLVYTVFSA) traverse the membrane as a helical segment. Residues 189 to 201 (TDPKRSARDSHVP) are Cytoplasmic-facing. Residues 202–222 (VLAPLPIGFAVFMVHLATIPI) form a helical membrane-spanning segment. Topologically, residues 223–249 (TGTGINPARSFGAAVIYNKSKPWDDHW) are extracellular. The NPA 2 motif lies at 228–230 (NPA). A helical transmembrane segment spans residues 250–270 (IFWVGPFIGAAIAAFYHQFVL). Over 271-287 (RASGSKSLGSFRSAANV) the chain is Cytoplasmic. Phosphoserine occurs at positions 280 and 283.

Belongs to the MIP/aquaporin (TC 1.A.8) family. PIP (TC 1.A.8.11) subfamily. Ubiquitinated by RMA1, leading to proteasomal degradation. Post-translationally, the phosphorylation at Ser-280 and Ser-283 is altered by salt (NaCl) and hydrogen peroxide H(2)O(2) treatments. Phosphorylation of Ser-283 is required for plasma membrane targeting. As to expression, predominantly expressed in roots and green siliques. Also expressed at lower level above ground and in flower buds.

It is found in the cell membrane. Functionally, water channel required to facilitate the transport of water across cell membrane. Probably involved in root water uptake. Its function is impaired by Hg(2+). The chain is Aquaporin PIP2-1 (PIP2-1) from Arabidopsis thaliana (Mouse-ear cress).